Consider the following 148-residue polypeptide: Lysozyme-like protein 6 (148 aa).

The first 19 residues, 1 to 19 (MTSPLLISLASCLVAVNQA), serve as a signal peptide directing secretion. Positions 20-148 (SLIGRCDLAK…SYWMTGCHLA (129 aa)) constitute a C-type lysozyme domain. 4 cysteine pairs are disulfide-bonded: Cys-25–Cys-145, Cys-49–Cys-133, Cys-83–Cys-98, and Cys-94–Cys-112. Residues Glu-54 and Asp-71 contribute to the active site.

Belongs to the glycosyl hydrolase 22 family. As to quaternary structure, monomer.

It localises to the secreted. The protein resides in the cell surface. Its subcellular location is the cell projection. The protein localises to the cilium. It is found in the flagellum. It catalyses the reaction Hydrolysis of (1-&gt;4)-beta-linkages between N-acetylmuramic acid and N-acetyl-D-glucosamine residues in a peptidoglycan and between N-acetyl-D-glucosamine residues in chitodextrins.. In terms of biological role, may be involved sperm-egg plasma membrane adhesion and fusion during fertilization. Exhibits bacteriolytic activity in vitro against Micrococcus luteus and Staphylococcus aureus. Shows weak bacteriolytic activity against Gram-positive bacteria at physiological pH. Bacteriolytic activity is pH-dependent, with a maximum at around pH 5.6. The chain is Lysozyme-like protein 6 (LYZL6) from Bos taurus (Bovine).